Reading from the N-terminus, the 688-residue chain is Small ribosomal subunit protein mS39 (688 aa).

Residues 1 to 37 (MASVASARWLRVSCGLCVPLTARRAGPCGRTPSSRFY) constitute a mitochondrion transit peptide. At Lys-126 the chain carries N6-acetyllysine. 10 PPR repeats span residues 149-183 (IEEI…GTTV), 184-219 (SLET…EELE), 258-292 (NAHS…RLRA), 293-333 (DVHT…NVKP), 334-370 (NLQT…GIEP), 371-412 (SLAT…SPKD), 415-449 (DDMF…DNRK), 457-491 (RNFY…VFFP), 492-526 (HSQT…GHTF), and 575-609 (PANS…NKIP). The disordered stretch occupies residues 667–688 (GDLTALTSDSESDSDSDTSKDK).

The protein belongs to the mitochondrion-specific ribosomal protein mS39 family. Component of the mitochondrial ribosome small subunit (28S) which comprises a 12S rRNA and about 30 distinct proteins. Associated with the 12S mitochondrial rRNA (12S mt-rRNA).

The protein localises to the mitochondrion. Mitochondrial RNA-binding protein that has a role in mitochondrial translation. This chain is Small ribosomal subunit protein mS39 (PTCD3), found in Bos taurus (Bovine).